The primary structure comprises 363 residues: Phosphoserine aminotransferase (363 aa).

An L-glutamate-binding site is contributed by arginine 42. Residues 76-77 (GR), tryptophan 102, threonine 156, aspartate 175, and glutamine 198 contribute to the pyridoxal 5'-phosphate site. N6-(pyridoxal phosphate)lysine is present on lysine 199. 240-241 (NT) serves as a coordination point for pyridoxal 5'-phosphate.

Belongs to the class-V pyridoxal-phosphate-dependent aminotransferase family. SerC subfamily. Homodimer. Pyridoxal 5'-phosphate serves as cofactor.

The protein resides in the cytoplasm. The enzyme catalyses O-phospho-L-serine + 2-oxoglutarate = 3-phosphooxypyruvate + L-glutamate. It catalyses the reaction 4-(phosphooxy)-L-threonine + 2-oxoglutarate = (R)-3-hydroxy-2-oxo-4-phosphooxybutanoate + L-glutamate. Its pathway is amino-acid biosynthesis; L-serine biosynthesis; L-serine from 3-phospho-D-glycerate: step 2/3. It functions in the pathway cofactor biosynthesis; pyridoxine 5'-phosphate biosynthesis; pyridoxine 5'-phosphate from D-erythrose 4-phosphate: step 3/5. Functionally, catalyzes the reversible conversion of 3-phosphohydroxypyruvate to phosphoserine and of 3-hydroxy-2-oxo-4-phosphonooxybutanoate to phosphohydroxythreonine. The protein is Phosphoserine aminotransferase of Shewanella denitrificans (strain OS217 / ATCC BAA-1090 / DSM 15013).